The chain runs to 489 residues: Cobyric acid synthase (489 aa).

Positions 247–439 (ALKVVVPVLP…IHGVFDEPAA (193 aa)) constitute a GATase cobBQ-type domain. Cysteine 328 (nucleophile) is an active-site residue. Residue histidine 431 is part of the active site.

Belongs to the CobB/CobQ family. CobQ subfamily.

The protein operates within cofactor biosynthesis; adenosylcobalamin biosynthesis. Its function is as follows. Catalyzes amidations at positions B, D, E, and G on adenosylcobyrinic A,C-diamide. NH(2) groups are provided by glutamine, and one molecule of ATP is hydrogenolyzed for each amidation. This is Cobyric acid synthase from Marinobacter nauticus (strain ATCC 700491 / DSM 11845 / VT8) (Marinobacter aquaeolei).